The chain runs to 334 residues: Beta-ketoacyl-[acyl-carrier-protein] synthase III (334 aa).

Catalysis depends on residues cysteine 114 and histidine 253. The segment at glutamine 254–arginine 258 is ACP-binding. The active site involves asparagine 283.

Belongs to the thiolase-like superfamily. FabH family. In terms of assembly, homodimer.

The protein resides in the cytoplasm. It catalyses the reaction malonyl-[ACP] + acetyl-CoA + H(+) = 3-oxobutanoyl-[ACP] + CO2 + CoA. It functions in the pathway lipid metabolism; fatty acid biosynthesis. Its function is as follows. Catalyzes the condensation reaction of fatty acid synthesis by the addition to an acyl acceptor of two carbons from malonyl-ACP. Catalyzes the first condensation reaction which initiates fatty acid synthesis and may therefore play a role in governing the total rate of fatty acid production. Possesses both acetoacetyl-ACP synthase and acetyl transacylase activities. Its substrate specificity determines the biosynthesis of branched-chain and/or straight-chain of fatty acids. In Campylobacter curvus (strain 525.92), this protein is Beta-ketoacyl-[acyl-carrier-protein] synthase III.